A 514-amino-acid polypeptide reads, in one-letter code: Triacylglyceride transporter MAB_2807 (514 aa).

Transmembrane regions (helical) follow at residues 19–39 (IAIG…YVVV), 58–78 (QVTP…PLLG), 88–108 (LILQ…ALST), 118–138 (VIQG…GADL), 157–177 (LGSV…GSWT), 178–198 (AIFW…QFSV), 210–230 (VDVV…VGLY), 239–259 (LPEW…AFIL), 278–298 (PFFA…VTLV), 316–336 (VFLL…GGWL), and 344–364 (IIAV…SGWP). The segment at 371 to 380 (VHNFGFFTLP) is beta-hairpin. The next 3 membrane-spanning stretches (helical) occupy residues 385–405 (DLVV…SAAL), 420–440 (VVVA…GWGI), and 485–505 (MFAI…FVGS).

The protein belongs to the major facilitator superfamily. P55 (TC 2.A.1.3.34) family.

It localises to the cell inner membrane. In association with lipoprotein LprG probably transports triacyglycerides (TAG) across the inner cell membrane into the periplasm; TAG probably regulates lipid metabolism and growth regulation and plays a structural role in the outer membrane. TAG (and maybe other lipids) enters the central cavity of the P55 transporter from within the cell inner membrane via clefts on the cytoplasmic face of P55 between TM5-TM8 and TM2-TM11. From there the lipid is probably transferred to the hydrophobic cavity of LprG. Involved in drug susceptibilty, its expression partially complements the antibiotic susceptibilty of a double lprG-mfs deletion. Probably does not function as a bona fide drug efflux pump, but instead plays a role in outer membrane biogenesis. Probably required with LprG for normal surface localization of lipoarabinomannan (LAM). In Mycobacteroides abscessus (strain ATCC 19977 / DSM 44196 / CCUG 20993 / CIP 104536 / JCM 13569 / NCTC 13031 / TMC 1543 / L948) (Mycobacterium abscessus), this protein is Triacylglyceride transporter MAB_2807.